Here is a 367-residue protein sequence, read N- to C-terminus: Peptide chain release factor 2 (367 aa).

N5-methylglutamine is present on glutamine 254.

It belongs to the prokaryotic/mitochondrial release factor family. Methylated by PrmC. Methylation increases the termination efficiency of RF2.

It is found in the cytoplasm. In terms of biological role, peptide chain release factor 2 directs the termination of translation in response to the peptide chain termination codons UGA and UAA. This Neisseria meningitidis serogroup B (strain ATCC BAA-335 / MC58) protein is Peptide chain release factor 2.